A 103-amino-acid polypeptide reads, in one-letter code: MYALVEINGKQYKAIEGEFLKIDKISPIEKDKLEFNSVLLINKDGEIKIGKPYVANSLIRCTYKEDKKDKKVVSYRYRRRKSSERKVGHRQTYSYILVDEIVF.

This sequence belongs to the bacterial ribosomal protein bL21 family. As to quaternary structure, part of the 50S ribosomal subunit. Contacts protein L20.

Its function is as follows. This protein binds to 23S rRNA in the presence of protein L20. This chain is Large ribosomal subunit protein bL21, found in Borrelia garinii subsp. bavariensis (strain ATCC BAA-2496 / DSM 23469 / PBi) (Borreliella bavariensis).